Here is a 342-residue protein sequence, read N- to C-terminus: MSPDALTPHDPRVTHHYITIPSTSLTYHYLLANPDSASFPHPTATVLLLHGWPDLSLGWRYQVPFLLSLGLRVIIPDMLGYGLTSAPSSPSEYSLKNLSFHMTHIIRQVNPSGQPVLLGTHDWGAFLGWRLALYYPELIKGIFAFCIPYSPPETKVTSLEEHIERHPELGYQLQNARGEVEEAVNGGSKERLRGWLNAMFGGLAKEDGGVMAFDPWKGVDVAKLEEVGGSPLVSEEVMDFYVEEYSRNGIRGPMNWYRTREINLEDELPLAEKCENWQFQVPAMIVMVGHDPALPPELTDGMEKYFAKGLRKEVIPEASHWVLIHTPEEVNKLVGEFLQQFL.

Positions 44–332 constitute an AB hydrolase-1 domain; the sequence is ATVLLLHGWP…LIHTPEEVNK (289 aa). The active-site Nucleophile is Asp-122. His-320 (proton acceptor) is an active-site residue.

Belongs to the AB hydrolase superfamily. Epoxide hydrolase family.

Its function is as follows. Highly reducing polyketide synthase; part of the gene cluster that mediates the biosynthesis of sordarial, a salicylic aldehyde structurally related to the phytotoxin pyriculol. The most interesting aspect of this pathway is formation of an aromatic product from the highly reducing polyketide synthase srdA. SrdA synthesizes a reduced polyketide chain from one molecule of acetyl-CoA and five molecules of malonyl-CoA. The polyketide chain is then reductively released as an aldehyde. The oxidoreductases srdC, srdD and srdE then oxidize one of the hydroxy groups to facilitate the intramolecular aldol condensation, followed by dehydration to yield a salicylic aldehyde. This aldehyde can undergo facile reduction by endogenous reductases to yield the alcohol 1-hydroxy-2-hydroxymethyl-3-pent-1,3-dienylbenzene. The flavin-dependent srdI counteract against the propensity of the aldehydes to be reduced under physiological conditions and is responsible for reoxidizing 1-hydroxy-2-hydroxymethyl-3-pent-1,3-dienylbenzene back to the salicylic aldehyde. This salicylic aldehyde is then selectively epoxidized by the cupin-domain-containing oxidoreductase srdB to yield the epoxide, which can be hydrolyzed stereoselectively by the hydrolase srdG to give the final product sordarial. This Neurospora crassa (strain ATCC 24698 / 74-OR23-1A / CBS 708.71 / DSM 1257 / FGSC 987) protein is Epoxide hydrolase srdG.